Consider the following 452-residue polypeptide: Eukaryotic translation initiation factor 4B3 (452 aa).

N-acetylalanine is present on A2. A disordered region spans residues 20 to 282 (EEHEAELKQQ…PSGGSRPRLV (263 aa)). The segment covering 28–37 (QQPSPTNQKS) has biased composition (polar residues). Positions 98 to 110 (PRERSAEELDRSK) are enriched in basic and acidic residues. Positions 111–122 (LGGGFRSYGGGR) are enriched in gly residues. The span at 126-136 (ESSSSRWGSSR) shows a compositional bias: low complexity. A compositionally biased stretch (basic and acidic residues) spans 137-156 (VSEDGERRGGGFNRDREPSR). 2 short sequence motifs (nuclear localization signal) span residues 172-179 (AKKPISGN) and 215-222 (PRRFVSSN). Positions 227–243 (DRFEKRGSFESLSRNRD) are enriched in basic and acidic residues. Phosphoserine occurs at positions 234, 270, and 300. Residues 265–280 (GAANGSPPPSGGSRPR) are compositionally biased toward low complexity. Positions 349–452 (AAMEKPNEKS…AKKEETEDKI (104 aa)) are disordered. The segment covering 369–386 (GRKDEERIERSWRKSTEH) has biased composition (basic and acidic residues). Positions 387–397 (SEEDAQEEEPA) are enriched in acidic residues. Basic and acidic residues-rich tracts occupy residues 400-419 (GAKKEETEDKPAVEEAKKEE) and 441-452 (EEAKKEETEDKI).

This sequence belongs to the eIF-4 subunit B family. In terms of assembly, homodimer. Nonspherical monomer. mRNA-discriminating component of initiation complexes. Interacts with MAD2. Post-translationally, phosphorylated.

The protein localises to the nucleus. In terms of biological role, promotes the eIF4F and eIF4A RNA-dependent ATP-hydrolysis activity with different efficiency depending on mRNAs, thus providing mRNA discrimination during initiation of translation. The sequence is that of Eukaryotic translation initiation factor 4B3 from Arabidopsis thaliana (Mouse-ear cress).